The chain runs to 858 residues: MSDARNVAVGVEEEFHILDLTTRQLVPRAEEILQRLDKDSFSPELLKSVVETNSQPTVDLLALRSNLLDLRRRLAEAAGELGLGPAASGTVPILDMDLLDVSRDARYEQMTEDYQIVAREQLICGAQVHVDVADRDLAMAVVAWTAPWLPMLLALSASSPYWLGADSGYASMRTLVWQRWPTAGVAGSFQTAAEYDQLIADLIKSGVISDPGMVYFDVRPSAHLPTVELRICDACPDVDNVILIAGLFRALVGRAIEEIEAGGQAPPPRAELLRAATWRAARSGLEGDLVDIFGAGPVPARAMLRRMLEEVRPQLERYDDWELIDNLAEQAAGRGSSALRQRRAFARRGLLTDVADLILAETRDVPPAGASLGVAPAVSAPDQIAPILLERYQPAGYDEVVDEHGAVRPQYRAVMRTLERLGPDTLDERVGAREAEQTDRGITFRVNGDSASRPFPFDIVPRIVAADDWAVLGRGLGQRVRALEAFLHDVYGERAAVADGIVPPWVVNDAPGLRHGGRAPGRDAIRITTAGIDLVRGGDGGWLVLEDNLRVPSGIAYAVEGRRLAESVLPELGPPPGILRLGTVPALLHDALVAAAPPAVTGEPAVAVLTSGPADSAYFEHAMLAEEMGVPLVEPGALLVDDDVAYRVDDGRRRRVDVLYRRIDEDELFAAPGADGAPLGPALLRAVRAGQVSVANAPGNGIGDDKVVYAYVPRMVTYYLGEQPVLDDVPTYVCGDPEQCEHVLANLDQLVVKPVDGFGGSGVVIGPHAEPYQLTAVREQILADPRRWIGQEVVALSTHPTWHDSHLEPCAVDLRVFVYAGVEPVVVPAALSRVAPPGSLIVNSSQGGGSKDTWIPRR.

The tract at residues 1-372 (MSDARNVAVG…RDVPPAGASL (372 aa)) is carboxylate-amine ligase. The segment at 373–858 (GVAPAVSAPD…GSKDTWIPRR (486 aa)) is unknown.

The protein in the N-terminal section; belongs to the glutamate--cysteine ligase type 2 family. YbdK subfamily.

The enzyme catalyses L-cysteine + L-glutamate + ATP = gamma-L-glutamyl-L-cysteine + ADP + phosphate + H(+). ATP-dependent carboxylate-amine ligase which exhibits weak glutamate--cysteine ligase activity. This Frankia alni (strain DSM 45986 / CECT 9034 / ACN14a) protein is Putative glutamate--cysteine ligase 2-3.